A 108-amino-acid polypeptide reads, in one-letter code: Nucleoid-associated protein CPS_3743 (108 aa).

A disordered region spans residues 87–108 (NKDKMGALTGGMQLPPGMKMPF).

The protein belongs to the YbaB/EbfC family. In terms of assembly, homodimer.

It is found in the cytoplasm. It localises to the nucleoid. Binds to DNA and alters its conformation. May be involved in regulation of gene expression, nucleoid organization and DNA protection. This is Nucleoid-associated protein CPS_3743 from Colwellia psychrerythraea (strain 34H / ATCC BAA-681) (Vibrio psychroerythus).